Here is a 242-residue protein sequence, read N- to C-terminus: Biosynthetic peptidoglycan transglycosylase (242 aa).

A helical membrane pass occupies residues Ile-19–Val-39.

Belongs to the glycosyltransferase 51 family.

The protein resides in the cell inner membrane. The catalysed reaction is [GlcNAc-(1-&gt;4)-Mur2Ac(oyl-L-Ala-gamma-D-Glu-L-Lys-D-Ala-D-Ala)](n)-di-trans,octa-cis-undecaprenyl diphosphate + beta-D-GlcNAc-(1-&gt;4)-Mur2Ac(oyl-L-Ala-gamma-D-Glu-L-Lys-D-Ala-D-Ala)-di-trans,octa-cis-undecaprenyl diphosphate = [GlcNAc-(1-&gt;4)-Mur2Ac(oyl-L-Ala-gamma-D-Glu-L-Lys-D-Ala-D-Ala)](n+1)-di-trans,octa-cis-undecaprenyl diphosphate + di-trans,octa-cis-undecaprenyl diphosphate + H(+). Its pathway is cell wall biogenesis; peptidoglycan biosynthesis. Its function is as follows. Peptidoglycan polymerase that catalyzes glycan chain elongation from lipid-linked precursors. This is Biosynthetic peptidoglycan transglycosylase from Salmonella newport (strain SL254).